We begin with the raw amino-acid sequence, 210 residues long: Mitochondrial coenzyme A diphosphatase NUDT8 (210 aa).

The Nudix hydrolase domain maps to 25–172; sequence LRSRPAAAAV…HFSYTLPVFL (148 aa). Lys70 carries the post-translational modification N6-succinyllysine. The short motif at 70 to 91 is the Nudix box element; that stretch reads KCDPDDQDVIHTALRETQEELG. Residues Glu85 and Glu89 each coordinate Mg(2+). Lys96 carries the post-translational modification N6-succinyllysine.

The protein belongs to the Nudix hydrolase family. In terms of assembly, monomer. It depends on Mg(2+) as a cofactor. Mn(2+) serves as cofactor. Expressed at the highest levels in the kidneys, heart, brown adipose tissue and liver (at protein level). Expressed at lower levels in the brain, skeletal muscle, and white adipose tissue (at protein level).

Its subcellular location is the mitochondrion. It catalyses the reaction an acyl-CoA + H2O = an acyl-4'-phosphopantetheine + adenosine 3',5'-bisphosphate + 2 H(+). The catalysed reaction is CoA + H2O = (R)-4'-phosphopantetheine + adenosine 3',5'-bisphosphate + 2 H(+). The enzyme catalyses acetyl-CoA + H2O = S-acetyl-4'-phosphopantetheine + adenosine 3',5'-bisphosphate + 2 H(+). It carries out the reaction butanoyl-CoA + H2O = S-butanoyl-4'-phosphopantetheine + adenosine 3',5'-bisphosphate + 2 H(+). It catalyses the reaction hexanoyl-CoA + H2O = hexanoyl-4'-phosphopantetheine + adenosine 3',5'-bisphosphate + 2 H(+). The catalysed reaction is octanoyl-CoA + H2O = S-octanoyl-4'-phosphopantetheine + adenosine 3',5'-bisphosphate + 2 H(+). The enzyme catalyses propanoyl-CoA + H2O = propanoyl-4'-phosphopantetheine + adenosine 3',5'-bisphosphate + 2 H(+). It carries out the reaction malonyl-CoA + H2O = malonyl-4'-phosphopantetheine + adenosine 3',5'-bisphosphate + 2 H(+). It catalyses the reaction succinyl-CoA + H2O = succinyl-4'-phosphopantetheine + adenosine 3',5'-bisphosphate + 2 H(+). The catalysed reaction is a 5'-end CoA-ribonucleoside in mRNA + H2O = a 5'-end phospho-adenosine-phospho-ribonucleoside in mRNA + (R)-4'-phosphopantetheine + 2 H(+). Functionally, acyl-CoA diphosphatase that mediates the hydrolysis of a wide range of CoA and CoA esters yielding 3',5'-ADP and the corresponding 4'-phosphopantetheine derivative as products. Hydrolyzes short- and medium-chain acyl-CoAs, exhibiting the highest activity toward free CoA, hexanoyl-CoA, and octanoyl-CoA and the lowest activity against acetyl-CoA. Exhibits decapping activity towards dpCoA-capped RNAs in vitro. This Mus musculus (Mouse) protein is Mitochondrial coenzyme A diphosphatase NUDT8 (Nudt8).